Reading from the N-terminus, the 429-residue chain is Tryptophan synthase beta chain 2 (429 aa).

Lys111 is subject to N6-(pyridoxal phosphate)lysine.

This sequence belongs to the TrpB family. As to quaternary structure, tetramer of two alpha and two beta chains. It depends on pyridoxal 5'-phosphate as a cofactor.

The enzyme catalyses (1S,2R)-1-C-(indol-3-yl)glycerol 3-phosphate + L-serine = D-glyceraldehyde 3-phosphate + L-tryptophan + H2O. It functions in the pathway amino-acid biosynthesis; L-tryptophan biosynthesis; L-tryptophan from chorismate: step 5/5. Functionally, the beta subunit is responsible for the synthesis of L-tryptophan from indole and L-serine. The polypeptide is Tryptophan synthase beta chain 2 (trpB2) (Saccharolobus solfataricus (strain ATCC 35092 / DSM 1617 / JCM 11322 / P2) (Sulfolobus solfataricus)).